The following is a 67-amino-acid chain: DNA-directed RNA polymerase subunit omega (67 aa).

The protein belongs to the RNA polymerase subunit omega family. As to quaternary structure, RNAP is composed of a core of 2 alpha, a beta and a beta' subunit. The core is associated with a delta subunit, and at least one of epsilon or omega. When a sigma factor is associated with the core the holoenzyme is formed, which can initiate transcription.

The catalysed reaction is RNA(n) + a ribonucleoside 5'-triphosphate = RNA(n+1) + diphosphate. Promotes RNA polymerase assembly. Latches the N- and C-terminal regions of the beta' subunit thereby facilitating its interaction with the beta and alpha subunits. In vitro reconstitution experiments this subunit is dispensible. This Bacillus subtilis (strain 168) protein is DNA-directed RNA polymerase subunit omega (rpoZ).